The sequence spans 271 residues: Oxamate carbamoyltransferase subunit AllH (271 aa).

It belongs to the AllH family. As to quaternary structure, the OXTCase is composed of 3 subunits, AllF, AllG and AllH. The cofactor is Mg(2+).

The catalysed reaction is oxamate + carbamoyl phosphate = N-carbamoyl-2-oxoglycine + phosphate. It functions in the pathway nitrogen metabolism; (S)-allantoin degradation. Functionally, component of a carbamoyltransferase involved in the anaerobic nitrogen utilization via the assimilation of allantoin. Catalyzes the conversion of oxalurate (N-carbamoyl-2-oxoglycine) to oxamate and carbamoyl phosphate. The polypeptide is Oxamate carbamoyltransferase subunit AllH (Escherichia coli O157:H7).